A 195-amino-acid polypeptide reads, in one-letter code: Recombination protein RecR (195 aa).

Residues 56–71 (CRQCHSFSDDDICPIC) form a C4-type zinc finger. One can recognise a Toprim domain in the interval 79 to 174 (SVLCVVETAA…KVTRIAQGIP (96 aa)).

Belongs to the RecR family.

May play a role in DNA repair. It seems to be involved in an RecBC-independent recombinational process of DNA repair. It may act with RecF and RecO. This Psychrobacter sp. (strain PRwf-1) protein is Recombination protein RecR.